The chain runs to 634 residues: Probable potassium transport system protein Kup (634 aa).

The next 12 helical transmembrane spans lie at 21 to 41 (LVIGAIGVVFGDIGTSPLYTL), 58 to 78 (VLGILSLVFWALMLVVTLKYV), 110 to 130 (MYVVGILGIFGASLFFGDGVI), 147 to 167 (APKLEPFVVPITLVVLSMLFL), 179 to 199 (AFGPITLLWFFALGAIGVYNM), 223 to 243 (WHAVFVLGAVVLAVTGGEALY), 258 to 278 (WQFVVLPMLTLTYLGQGALVL), 296 to 316 (ALYPMIVLATAATVIASQALI), 348 to 368 (IYVPAVNWCLLALVAVAVIGF), 377 to 397 (AYGVSVTGTMLITTVLMIIYA), 403 to 423 (VPAPLLWLFALVFLAVDCAFF), and 427 to 447 (IIKFLDGAWFPLLLGLILFTL).

The protein belongs to the HAK/KUP transporter (TC 2.A.72) family.

The protein resides in the cell inner membrane. It catalyses the reaction K(+)(in) + H(+)(in) = K(+)(out) + H(+)(out). Functionally, transport of potassium into the cell. Likely operates as a K(+):H(+) symporter. The sequence is that of Probable potassium transport system protein Kup from Xanthomonas axonopodis pv. citri (strain 306).